The following is a 206-amino-acid chain: Ran-specific GTPase-activating protein (206 aa).

Over residues 1–26 (MAAAKDTHEDHDTSTENADESNHDPQ) the composition is skewed to basic and acidic residues. Positions 1 to 33 (MAAAKDTHEDHDTSTENADESNHDPQFEPIVSL) are disordered. Alanine 2 is subject to N-acetylalanine. Phosphothreonine is present on threonine 13. Residues serine 21 and serine 60 each carry the phosphoserine modification. The RanBD1 domain occupies 26–164 (QFEPIVSLPE…FEECRKEIEE (139 aa)). Lysine 150 bears the N6-acetyllysine; alternate mark. At lysine 150 the chain carries N6-succinyllysine; alternate. Residues 162–184 (IEEKEKKGSGKNDSTEKVVEKLE) are compositionally biased toward basic and acidic residues. The tract at residues 162-206 (IEEKEKKGSGKNDSTEKVVEKLEALSVQEGEQPQDAAPAAVEEEQ) is disordered. N6-acetyllysine is present on lysine 182. Position 187 is a phosphoserine (serine 187).

It belongs to the RANBP1 family. In terms of assembly, interacts with RAN (via C-terminus of GTP-bound form) but not with GDP-bound RAN. Identified in a complex composed of RAN, RANGAP1 and RANBP1. Identified in a complex that contains TNPO1, RAN and RANBP1. Identified in a complex that contains CSE1L, KPNA2, RAN and RANBP1. Identified in a complex with nucleotide-free RAN and RCC1.

In terms of biological role, plays a role in RAN-dependent nucleocytoplasmic transport. Alleviates the TNPO1-dependent inhibition of RAN GTPase activity and mediates the dissociation of RAN from proteins involved in transport into the nucleus. Induces a conformation change in the complex formed by XPO1 and RAN that triggers the release of the nuclear export signal of cargo proteins. Promotes the disassembly of the complex formed by RAN and importin beta. Promotes dissociation of RAN from a complex with KPNA2 and CSE1L. Required for normal mitotic spindle assembly and normal progress through mitosis via its effect on RAN. Does not increase the RAN GTPase activity by itself, but increases GTP hydrolysis mediated by RANGAP1. Inhibits RCC1-dependent exchange of RAN-bound GDP by GTP. This is Ran-specific GTPase-activating protein (RANBP1) from Bos taurus (Bovine).